Here is a 164-residue protein sequence, read N- to C-terminus: Class I hydrophobin rodA (164 aa).

The first 18 residues, M1–A18, serve as a signal peptide directing secretion. Residue N50 is glycosylated (N-linked (GlcNAc...) asparagine). Cystine bridges form between C60–C138, C68–C132, C69–C109, and C139–C157.

Belongs to the fungal hydrophobin family. As to quaternary structure, self-assembles to form functional amyloid fibrils called rodlets. Self-assembly into fibrillar rodlets occurs spontaneously at hydrophobic:hydrophilic interfaces and the rodlets further associate laterally to form amphipathic monolayers.

It is found in the secreted. It localises to the cell wall. Aerial growth, conidiation, and dispersal of filamentous fungi in the environment rely upon a capability of their secreting small amphipathic proteins called hydrophobins (HPBs) with low sequence identity. Class I can self-assemble into an outermost layer of rodlet bundles on aerial cell surfaces, conferring cellular hydrophobicity that supports fungal growth, development and dispersal; whereas Class II form highly ordered films at water-air interfaces through intermolecular interactions but contribute nothing to the rodlet structure. RodA is a class I hydrophobin involved in the cell surface hydrophobicity and conidiation under aerial conditions. The surface rodlet layer of the conidial cell wall makes airborne conidia of filamentous fungi inert to both innate and adaptive immunity. This Penicillium camembertii protein is Class I hydrophobin rodA.